We begin with the raw amino-acid sequence, 409 residues long: Phospho-N-acetylmuramoyl-pentapeptide-transferase (409 aa).

A run of 10 helical transmembrane segments spans residues 23–43, 73–93, 95–115, 132–152, 214–234, 247–267, 279–299, 305–325, 331–351, and 386–406; these read YITF…TIFG, TPTM…LLLA, LNNI…AIGF, GIFK…TLYF, YAWL…SNGA, TSAI…NVIF, SGEM…FLWY, AVFM…VLAI, MLIP…VLQV, and KIVT…IVTL.

It belongs to the glycosyltransferase 4 family. MraY subfamily. It depends on Mg(2+) as a cofactor.

The protein localises to the cell inner membrane. The enzyme catalyses UDP-N-acetyl-alpha-D-muramoyl-L-alanyl-gamma-D-glutamyl-meso-2,6-diaminopimeloyl-D-alanyl-D-alanine + di-trans,octa-cis-undecaprenyl phosphate = di-trans,octa-cis-undecaprenyl diphospho-N-acetyl-alpha-D-muramoyl-L-alanyl-D-glutamyl-meso-2,6-diaminopimeloyl-D-alanyl-D-alanine + UMP. The protein operates within cell wall biogenesis; peptidoglycan biosynthesis. Functionally, catalyzes the initial step of the lipid cycle reactions in the biosynthesis of the cell wall peptidoglycan: transfers peptidoglycan precursor phospho-MurNAc-pentapeptide from UDP-MurNAc-pentapeptide onto the lipid carrier undecaprenyl phosphate, yielding undecaprenyl-pyrophosphoryl-MurNAc-pentapeptide, known as lipid I. The protein is Phospho-N-acetylmuramoyl-pentapeptide-transferase of Flavobacterium psychrophilum (strain ATCC 49511 / DSM 21280 / CIP 103535 / JIP02/86).